Here is a 456-residue protein sequence, read N- to C-terminus: Bifunctional protein GlmU (456 aa).

The tract at residues 1 to 229 (MLNNAMSVVI…LSEVEGVNNR (229 aa)) is pyrophosphorylase. UDP-N-acetyl-alpha-D-glucosamine is bound by residues 11-14 (LAAG), Lys-25, Gln-76, 81-82 (GT), 103-105 (YGD), Gly-140, Glu-154, Asn-169, and Asn-227. Mg(2+) is bound at residue Asp-105. Asn-227 contributes to the Mg(2+) binding site. The interval 230–250 (LQLSRLERVYQSEQAEKLLLA) is linker. The segment at 251–456 (GVMLRDPARF…EGWRRPVKKK (206 aa)) is N-acetyltransferase. UDP-N-acetyl-alpha-D-glucosamine contacts are provided by Arg-333 and Lys-351. The active-site Proton acceptor is His-363. Residues Tyr-366 and Asn-377 each contribute to the UDP-N-acetyl-alpha-D-glucosamine site. Acetyl-CoA-binding positions include Ala-380, 386 to 387 (NY), Ser-405, Ala-423, and Arg-440.

In the N-terminal section; belongs to the N-acetylglucosamine-1-phosphate uridyltransferase family. This sequence in the C-terminal section; belongs to the transferase hexapeptide repeat family. Homotrimer. Mg(2+) serves as cofactor.

The protein localises to the cytoplasm. It catalyses the reaction alpha-D-glucosamine 1-phosphate + acetyl-CoA = N-acetyl-alpha-D-glucosamine 1-phosphate + CoA + H(+). It carries out the reaction N-acetyl-alpha-D-glucosamine 1-phosphate + UTP + H(+) = UDP-N-acetyl-alpha-D-glucosamine + diphosphate. Its pathway is nucleotide-sugar biosynthesis; UDP-N-acetyl-alpha-D-glucosamine biosynthesis; N-acetyl-alpha-D-glucosamine 1-phosphate from alpha-D-glucosamine 6-phosphate (route II): step 2/2. The protein operates within nucleotide-sugar biosynthesis; UDP-N-acetyl-alpha-D-glucosamine biosynthesis; UDP-N-acetyl-alpha-D-glucosamine from N-acetyl-alpha-D-glucosamine 1-phosphate: step 1/1. It participates in bacterial outer membrane biogenesis; LPS lipid A biosynthesis. Catalyzes the last two sequential reactions in the de novo biosynthetic pathway for UDP-N-acetylglucosamine (UDP-GlcNAc). The C-terminal domain catalyzes the transfer of acetyl group from acetyl coenzyme A to glucosamine-1-phosphate (GlcN-1-P) to produce N-acetylglucosamine-1-phosphate (GlcNAc-1-P), which is converted into UDP-GlcNAc by the transfer of uridine 5-monophosphate (from uridine 5-triphosphate), a reaction catalyzed by the N-terminal domain. This is Bifunctional protein GlmU from Escherichia coli O6:K15:H31 (strain 536 / UPEC).